We begin with the raw amino-acid sequence, 156 residues long: 2-C-methyl-D-erythritol 2,4-cyclodiphosphate synthase (156 aa).

Asp9 and His11 together coordinate a divalent metal cation. 4-CDP-2-C-methyl-D-erythritol 2-phosphate is bound by residues 9–11 (DAH) and 35–36 (HS). His43 provides a ligand contact to a divalent metal cation. 57 to 59 (DIG) lines the 4-CDP-2-C-methyl-D-erythritol 2-phosphate pocket.

The protein belongs to the IspF family. In terms of assembly, homotrimer. Requires a divalent metal cation as cofactor.

It carries out the reaction 4-CDP-2-C-methyl-D-erythritol 2-phosphate = 2-C-methyl-D-erythritol 2,4-cyclic diphosphate + CMP. Its pathway is isoprenoid biosynthesis; isopentenyl diphosphate biosynthesis via DXP pathway; isopentenyl diphosphate from 1-deoxy-D-xylulose 5-phosphate: step 4/6. Involved in the biosynthesis of isopentenyl diphosphate (IPP) and dimethylallyl diphosphate (DMAPP), two major building blocks of isoprenoid compounds. Catalyzes the conversion of 4-diphosphocytidyl-2-C-methyl-D-erythritol 2-phosphate (CDP-ME2P) to 2-C-methyl-D-erythritol 2,4-cyclodiphosphate (ME-CPP) with a corresponding release of cytidine 5-monophosphate (CMP). This Hydrogenobaculum sp. (strain Y04AAS1) protein is 2-C-methyl-D-erythritol 2,4-cyclodiphosphate synthase.